The chain runs to 938 residues: AP-4 complex subunit epsilon (938 aa).

10 HEAT repeats span residues 118–153 (DLII…INEE), 154–190 (TIPA…KSPS), 192–227 (VSHL…EDVN), 234–272 (SSFV…IMAL), 321–358 (KLLE…ISPD), 359–395 (IAEQ…SSNV), 397–431 (VIVD…QFAP), 454–495 (KVAH…EPKL), 517–556 (YSAS…FEIA), and 562–601 (DVLP…RAVE). 4 disordered regions span residues 690 to 712 (EPSY…RESS), 725 to 867 (WGRP…VMGL), 880 to 912 (VDSL…KEAL), and 919 to 938 (RQMG…DLLG). The span at 694–706 (YSESHQPISTSLV) shows a compositional bias: polar residues. Residues 728-744 (PSYQSTTAASSTTPQAA) are compositionally biased toward low complexity. Basic and acidic residues predominate over residues 764–779 (SSYEPKKPEIDPEKQR). The span at 808–821 (ANKTATVPKENQTP) shows a compositional bias: polar residues. Composition is skewed to low complexity over residues 853–863 (DSSSQDGGSSD) and 880–891 (VDSLLSELSDSS). One copy of the HEAT 11 repeat lies at 874 to 911 (VTTTTSVDSLLSELSDSSKGNSRTYQPQTSKGPNTKEA). Over residues 892 to 906 (KGNSRTYQPQTSKGP) the composition is skewed to polar residues.

This sequence belongs to the adaptor complexes large subunit family. As to quaternary structure, adaptor protein complex 4 (AP-4) is a heterotetramer composed of two large adaptins (epsilon-type subunit and beta-type subunit), a medium adaptin (mu-type subunit) and a small adaptin (sigma-type subunit).

The protein resides in the golgi apparatus. The protein localises to the trans-Golgi network. Its subcellular location is the membrane. It is found in the coated pit. Its function is as follows. Subunit of novel type of clathrin- or non-clathrin-associated protein coat involved in targeting proteins from the trans-Golgi network (TGN) to the endosomal-lysosomal system. In Arabidopsis thaliana (Mouse-ear cress), this protein is AP-4 complex subunit epsilon.